A 405-amino-acid chain; its full sequence is Tryptophan synthase beta chain (405 aa).

K96 carries the N6-(pyridoxal phosphate)lysine modification.

The protein belongs to the TrpB family. As to quaternary structure, tetramer of two alpha and two beta chains. Requires pyridoxal 5'-phosphate as cofactor.

The enzyme catalyses (1S,2R)-1-C-(indol-3-yl)glycerol 3-phosphate + L-serine = D-glyceraldehyde 3-phosphate + L-tryptophan + H2O. It functions in the pathway amino-acid biosynthesis; L-tryptophan biosynthesis; L-tryptophan from chorismate: step 5/5. In terms of biological role, the beta subunit is responsible for the synthesis of L-tryptophan from indole and L-serine. The chain is Tryptophan synthase beta chain from Clostridium botulinum (strain Eklund 17B / Type B).